The sequence spans 89 residues: Small ribosomal subunit protein uS15 (89 aa).

Residues 1–21 (MSITTEEKARVMKEYGTKDGD) show a composition bias toward basic and acidic residues. Residues 1–24 (MSITTEEKARVMKEYGTKDGDTGS) form a disordered region.

This sequence belongs to the universal ribosomal protein uS15 family. Part of the 30S ribosomal subunit. Forms a bridge to the 50S subunit in the 70S ribosome, contacting the 23S rRNA.

Functionally, one of the primary rRNA binding proteins, it binds directly to 16S rRNA where it helps nucleate assembly of the platform of the 30S subunit by binding and bridging several RNA helices of the 16S rRNA. In terms of biological role, forms an intersubunit bridge (bridge B4) with the 23S rRNA of the 50S subunit in the ribosome. The sequence is that of Small ribosomal subunit protein uS15 from Ruegeria pomeroyi (strain ATCC 700808 / DSM 15171 / DSS-3) (Silicibacter pomeroyi).